Consider the following 201-residue polypeptide: Probable nicotinate-nucleotide adenylyltransferase (201 aa).

Belongs to the NadD family.

The catalysed reaction is nicotinate beta-D-ribonucleotide + ATP + H(+) = deamido-NAD(+) + diphosphate. The protein operates within cofactor biosynthesis; NAD(+) biosynthesis; deamido-NAD(+) from nicotinate D-ribonucleotide: step 1/1. Catalyzes the reversible adenylation of nicotinate mononucleotide (NaMN) to nicotinic acid adenine dinucleotide (NaAD). The protein is Probable nicotinate-nucleotide adenylyltransferase of Neisseria gonorrhoeae (strain ATCC 700825 / FA 1090).